Consider the following 126-residue polypeptide: Probable V-type proton ATPase subunit G (126 aa).

The tract at residues N23–E45 is disordered. A compositionally biased stretch (basic residues) spans R26 to Q35.

This sequence belongs to the V-ATPase G subunit family. In terms of assembly, V-ATPase is a heteromultimeric enzyme made up of two complexes: the ATP-hydrolytic V1 complex and the proton translocation V0 complex. The V1 complex consists of three catalytic AB heterodimers that form a heterohexamer, three peripheral stalks each consisting of EG heterodimers, one central rotor including subunits D and F, and the regulatory subunits C and H. The proton translocation complex V0 consists of the proton transport subunit a, a ring of proteolipid subunits c9c'', rotary subunit d, subunits e and f, and the accessory subunits vah-19/Ac45 and vah-20/PRR.

Subunit of the V1 complex of vacuolar(H+)-ATPase (V-ATPase), a multisubunit enzyme composed of a peripheral complex (V1) that hydrolyzes ATP and a membrane integral complex (V0) that translocates protons. V-ATPase is responsible for acidifying and maintaining the pH of intracellular compartments and in some cell types, is targeted to the plasma membrane, where it is responsible for acidifying the extracellular environment. In neurons, required for necrotic cell death by promoting intracellular acidification. The sequence is that of Probable V-type proton ATPase subunit G from Caenorhabditis briggsae.